Reading from the N-terminus, the 74-residue chain is UPF0248 protein MK0350 (74 aa).

The protein belongs to the UPF0248 family.

The sequence is that of UPF0248 protein MK0350 from Methanopyrus kandleri (strain AV19 / DSM 6324 / JCM 9639 / NBRC 100938).